The following is a 512-amino-acid chain: ATP synthase subunit alpha (512 aa).

An ATP-binding site is contributed by 169–176 (GDRQTGKT).

The protein belongs to the ATPase alpha/beta chains family. As to quaternary structure, F-type ATPases have 2 components, CF(1) - the catalytic core - and CF(0) - the membrane proton channel. CF(1) has five subunits: alpha(3), beta(3), gamma(1), delta(1), epsilon(1). CF(0) has three main subunits: a(1), b(2) and c(9-12). The alpha and beta chains form an alternating ring which encloses part of the gamma chain. CF(1) is attached to CF(0) by a central stalk formed by the gamma and epsilon chains, while a peripheral stalk is formed by the delta and b chains.

Its subcellular location is the cell inner membrane. It carries out the reaction ATP + H2O + 4 H(+)(in) = ADP + phosphate + 5 H(+)(out). In terms of biological role, produces ATP from ADP in the presence of a proton gradient across the membrane. The alpha chain is a regulatory subunit. The polypeptide is ATP synthase subunit alpha (Aromatoleum aromaticum (strain DSM 19018 / LMG 30748 / EbN1) (Azoarcus sp. (strain EbN1))).